We begin with the raw amino-acid sequence, 244 residues long: NAD(P)H-quinone oxidoreductase subunit K (244 aa).

Residues Cys60, Cys61, Cys125, and Cys156 each coordinate [4Fe-4S] cluster. The tract at residues 213–244 is disordered; that stretch reads KSEKSIESSKLNPVEESSENIYETNSIDEVIK. Over residues 231 to 244 the composition is skewed to polar residues; it reads ENIYETNSIDEVIK.

It belongs to the complex I 20 kDa subunit family. In terms of assembly, NDH-1 can be composed of about 15 different subunits; different subcomplexes with different compositions have been identified which probably have different functions. The cofactor is [4Fe-4S] cluster.

It is found in the cellular thylakoid membrane. The enzyme catalyses a plastoquinone + NADH + (n+1) H(+)(in) = a plastoquinol + NAD(+) + n H(+)(out). It carries out the reaction a plastoquinone + NADPH + (n+1) H(+)(in) = a plastoquinol + NADP(+) + n H(+)(out). Its function is as follows. NDH-1 shuttles electrons from an unknown electron donor, via FMN and iron-sulfur (Fe-S) centers, to quinones in the respiratory and/or the photosynthetic chain. The immediate electron acceptor for the enzyme in this species is believed to be plastoquinone. Couples the redox reaction to proton translocation, and thus conserves the redox energy in a proton gradient. Cyanobacterial NDH-1 also plays a role in inorganic carbon-concentration. The sequence is that of NAD(P)H-quinone oxidoreductase subunit K from Prochlorococcus marinus subsp. pastoris (strain CCMP1986 / NIES-2087 / MED4).